A 435-amino-acid chain; its full sequence is 5-methylthioadenosine/S-adenosylhomocysteine deaminase (435 aa).

Zn(2+)-binding residues include His-65 and His-67. The substrate site is built by Glu-94, Arg-150, and His-189. His-216 provides a ligand contact to Zn(2+). 2 residues coordinate substrate: Glu-219 and Asp-304. Residue Asp-304 coordinates Zn(2+).

The protein belongs to the metallo-dependent hydrolases superfamily. MTA/SAH deaminase family. Requires Zn(2+) as cofactor.

The enzyme catalyses S-adenosyl-L-homocysteine + H2O + H(+) = S-inosyl-L-homocysteine + NH4(+). It carries out the reaction S-methyl-5'-thioadenosine + H2O + H(+) = S-methyl-5'-thioinosine + NH4(+). Functionally, catalyzes the deamination of 5-methylthioadenosine and S-adenosyl-L-homocysteine into 5-methylthioinosine and S-inosyl-L-homocysteine, respectively. Is also able to deaminate adenosine. The polypeptide is 5-methylthioadenosine/S-adenosylhomocysteine deaminase (Bacillus cereus (strain 03BB102)).